The following is a 243-amino-acid chain: UPF0246 protein SAG2081 (243 aa).

Belongs to the UPF0246 family.

The sequence is that of UPF0246 protein SAG2081 from Streptococcus agalactiae serotype V (strain ATCC BAA-611 / 2603 V/R).